A 186-amino-acid polypeptide reads, in one-letter code: MRGLFVGRFQPVHNGHLKALEYVFEEVEEVIIGIGSAQVSHTLKNPFTTSERMEMLIRALDEKGIPRGKYFLVALPDINFNSIWAPYVEAIVPKFDIVFTGNSLVAQLFRERGYKVIVQPMFRKDILSATEIRRRMIEDQTWEELVPKSVVEYIKEIKGVERIKMLATDLEKNEKELQTPLRIPEF.

It belongs to the archaeal NMN adenylyltransferase family.

The protein resides in the cytoplasm. The enzyme catalyses beta-nicotinamide D-ribonucleotide + ATP + H(+) = diphosphate + NAD(+). Its pathway is cofactor biosynthesis; NAD(+) biosynthesis; NAD(+) from nicotinamide D-ribonucleotide: step 1/1. This chain is Nicotinamide-nucleotide adenylyltransferase, found in Thermococcus sibiricus (strain DSM 12597 / MM 739).